A 221-amino-acid chain; its full sequence is Kinetochore protein Spc25 (221 aa).

Positions 63-114 (VIQRREEMEKRVSFMEELAQEVEATKQRNLVMREQIKQQKMLVRQRKNEIME) form a coiled coil.

The protein belongs to the SPC25 family. Component of the Ndc80 complex, which is composed of Ndc80, Nuf2 and Spc25.

It is found in the nucleus. The protein localises to the chromosome. The protein resides in the centromere. It localises to the kinetochore. Functionally, acts as a component of the essential kinetochore-associated Ndc80 complex, which is required for chromosome segregation and spindle checkpoint activity during meiosis and mitosis. Required for kinetochore integrity and the organization of stable microtubule binding sites in the outer plate of the kinetochore. Participates in SAC signaling that responds specifically to disruptions in spindle microtubule dynamics. The NDC80 complex synergistically enhances the affinity of the SKA1 complex for microtubules and may allow the NDC80 complex to track depolymerizing microtubules. The chain is Kinetochore protein Spc25 from Drosophila eugracilis (Fruit fly).